A 57-amino-acid polypeptide reads, in one-letter code: Large ribosomal subunit protein bL32 (57 aa).

This sequence belongs to the bacterial ribosomal protein bL32 family.

This is Large ribosomal subunit protein bL32 from Staphylococcus saprophyticus subsp. saprophyticus (strain ATCC 15305 / DSM 20229 / NCIMB 8711 / NCTC 7292 / S-41).